Reading from the N-terminus, the 292-residue chain is tRNA (guanine-N(7)-)-methyltransferase (292 aa).

The segment at 1–54 is disordered; sequence MLKRDQSEMDIEAETANMGKEEKESFVHKRQKYRQEQEEKRLAAKKGVSFEQPE. The segment covering 19 to 42 has biased composition (basic and acidic residues); that stretch reads GKEEKESFVHKRQKYRQEQEEKRL. S-adenosyl-L-methionine contacts are provided by residues Gly110, 133–134, 168–169, and Cys188; these read EI and NA. Residue Asp191 is part of the active site. 266–268 is an S-adenosyl-L-methionine binding site; the sequence is TEE.

Belongs to the class I-like SAM-binding methyltransferase superfamily. TrmB family. In terms of assembly, forms a complex with TRM82.

Its subcellular location is the nucleus. The catalysed reaction is guanosine(46) in tRNA + S-adenosyl-L-methionine = N(7)-methylguanosine(46) in tRNA + S-adenosyl-L-homocysteine. The protein operates within tRNA modification; N(7)-methylguanine-tRNA biosynthesis. Its function is as follows. Catalyzes the formation of N(7)-methylguanine at position 46 (m7G46) in tRNA. This Yarrowia lipolytica (strain CLIB 122 / E 150) (Yeast) protein is tRNA (guanine-N(7)-)-methyltransferase.